The sequence spans 479 residues: MNTILAQQIANEGGVEAWMIAQQHKSLLRFLTCGSVDDGKSTLIGRLLHDTLQIYEDQLSSLHNDSKRHGTQGEKLDLALLVDGLQAEREQGITIDVAYRYFSTEKRKFIIADTPGHEQYTRNMATGASTCDLAILLIDARKGVLDQTRRHSFISTLLGIKHLVVAINKMDLVDYREETFARIREDYLTFAEQLPGDLDIRFVPLSALEGDNVAAQSANMRWYSGPTLLEVLETVDIQRAVDRQPMRFPVQYVNRPNLDFRGYAGTLASGSVKVGERIKVLPSGVESSVARIVTFDGDKEEACAGEAITLVLNDDIDISRGDLLLAANETLAPARHAAIDVVWMAEQPLAPGQSYDVKLAGKKTRARIEAICYQIDINNLTQRDVESLPLNGIGLVEMTFDEPLALDIYQQNPVTGGLIFIDRLSNVTVGAGMVRELDERGATPSVEYSAFELELNALVRRHFPHWDARDLLGDKHGAA.

Positions 25–239 (KSLLRFLTCG…EVLETVDIQR (215 aa)) constitute a tr-type G domain. A G1 region spans residues 34-41 (GSVDDGKS). 34–41 (GSVDDGKS) contributes to the GTP binding site. Residues 92 to 96 (GITID) form a G2 region. The segment at 113–116 (DTPG) is G3. Residues 113-117 (DTPGH) and 168-171 (NKMD) contribute to the GTP site. Residues 168–171 (NKMD) are G4. The tract at residues 206 to 208 (SAL) is G5.

It belongs to the TRAFAC class translation factor GTPase superfamily. Classic translation factor GTPase family. CysN/NodQ subfamily. As to quaternary structure, heterodimer composed of CysD, the smaller subunit, and CysN.

It carries out the reaction sulfate + ATP + H(+) = adenosine 5'-phosphosulfate + diphosphate. Its pathway is sulfur metabolism; hydrogen sulfide biosynthesis; sulfite from sulfate: step 1/3. With CysD forms the ATP sulfurylase (ATPS) that catalyzes the adenylation of sulfate producing adenosine 5'-phosphosulfate (APS) and diphosphate, the first enzymatic step in sulfur assimilation pathway. APS synthesis involves the formation of a high-energy phosphoric-sulfuric acid anhydride bond driven by GTP hydrolysis by CysN coupled to ATP hydrolysis by CysD. The protein is Sulfate adenylyltransferase subunit 1 of Salmonella heidelberg (strain SL476).